The following is a 155-amino-acid chain: S-ribosylhomocysteine lyase (155 aa).

Fe cation-binding residues include His57, His61, and Cys124.

It belongs to the LuxS family. In terms of assembly, homodimer. Fe cation serves as cofactor.

The enzyme catalyses S-(5-deoxy-D-ribos-5-yl)-L-homocysteine = (S)-4,5-dihydroxypentane-2,3-dione + L-homocysteine. Functionally, involved in the synthesis of autoinducer 2 (AI-2) which is secreted by bacteria and is used to communicate both the cell density and the metabolic potential of the environment. The regulation of gene expression in response to changes in cell density is called quorum sensing. Catalyzes the transformation of S-ribosylhomocysteine (RHC) to homocysteine (HC) and 4,5-dihydroxy-2,3-pentadione (DPD). This is S-ribosylhomocysteine lyase from Listeria monocytogenes serotype 4a (strain HCC23).